The sequence spans 293 residues: MTLMDGRAIAAQIKLEITKEVQQIVINGEKKPHLAAILVGHDCSSETYVANKVKTCEELGFQSTLIRYESDLIENKLLATVEKLNQDSNIDGFIIQLPLPKHISEQKVIEAIDYKKDVDGFHPVNAGRMAIGLPCFVPATPAGILELLKRYKITTAGKHCVVLGRSNIVGKPIANLLMRKAYPGDCTVTVCHSRTKNILKHCLEADIIIAAMGVPEFLKGNMVKDGVVVIDVGTTRVLSTETDSGFKLRGDVRFKEVAPKCSYISPVPGGVGPMTIISLMRNTLLARKKVIYS.

Residues 164–166 (GRS), serine 193, and threonine 234 contribute to the NADP(+) site.

Belongs to the tetrahydrofolate dehydrogenase/cyclohydrolase family. Homodimer.

It catalyses the reaction (6R)-5,10-methylene-5,6,7,8-tetrahydrofolate + NADP(+) = (6R)-5,10-methenyltetrahydrofolate + NADPH. The enzyme catalyses (6R)-5,10-methenyltetrahydrofolate + H2O = (6R)-10-formyltetrahydrofolate + H(+). It functions in the pathway one-carbon metabolism; tetrahydrofolate interconversion. Catalyzes the oxidation of 5,10-methylenetetrahydrofolate to 5,10-methenyltetrahydrofolate and then the hydrolysis of 5,10-methenyltetrahydrofolate to 10-formyltetrahydrofolate. The polypeptide is Bifunctional protein FolD (Azobacteroides pseudotrichonymphae genomovar. CFP2).